Consider the following 687-residue polypeptide: Putative metabolite transport protein YDL199C (687 aa).

The segment at 1 to 22 is disordered; it reads MKPPLNMSRSNKPLTQEANSSA. The Extracellular segment spans residues 1 to 122; it reads MKPPLNMSRS…RHSSRVLRTS (122 aa). Positions 7 to 22 are enriched in polar residues; that stretch reads MSRSNKPLTQEANSSA. Ser-90 carries the post-translational modification Phosphoserine. The helical transmembrane segment at 123-143 threads the bilayer; it reads FISFVVLVSSLSGLDQGLISG. At 144–164 the chain is on the cytoplasmic side; sequence NVMTLSFQKYFHYPLTSPLGN. The chain crosses the membrane as a helical span at residues 165–185; it reads IVSIVNLGAFMASLFVYSGIL. The Extracellular segment spans residues 186-192; sequence EPCSRKK. A helical membrane pass occupies residues 193 to 213; sequence MLQISTMIYSLGAIVQVLALN. At 214-216 the chain is on the cytoplasmic side; sequence QWC. Residues 217-237 traverse the membrane as a helical segment; the sequence is LLLGRFLLGVGMGFAFSMVII. Over 238–251 the chain is Extracellular; sequence YQFEFPLPCIRKRT. A helical membrane pass occupies residues 252–272; sequence LISIQCVSSVIAYSFGIWINC. Residues 273–283 are Cytoplasmic-facing; it reads AFRYLGFAWRY. Residues 284–304 traverse the membrane as a helical segment; that stretch reads PLSTHVALGIILNLMSFYLIL. The Extracellular segment spans residues 305–410; it reads ESPSWLLKQK…MGRGERKSIY (106 aa). A helical transmembrane segment spans residues 411 to 431; sequence LTGLNALIYSIVILAYVPLVL. Residues 432–439 are Cytoplasmic-facing; it reads RKRKEKTN. The helical transmembrane segment at 440–460 threads the bilayer; the sequence is VLLGSIVMCALLFTISFTDWF. The Extracellular segment spans residues 461–469; it reads PKSTTRYIS. Residues 470–490 form a helical membrane-spanning segment; the sequence is ILFAVFLFTHFISWDSIGWVM. The Cytoplasmic portion of the chain corresponds to 491-500; sequence TIELLPHLSQ. The helical transmembrane segment at 501–521 threads the bilayer; sequence APVILLVSNFYWIFKWFVSLI. The Extracellular portion of the chain corresponds to 522-533; that stretch reads TPILIDRLSWKF. Residues 534–554 form a helical membrane-spanning segment; sequence YLIPSLSSFISIIFVLKIFPI. Residues 555–687 are Cytoplasmic-facing; sequence ETRDERLDSD…QNSPGDMAVA (133 aa). Disordered stretches follow at residues 561-587 and 654-687; these read LDSD…SEFS and SFHN…MAVA. Residues 660-673 show a composition bias toward polar residues; it reads DPNISDNIAANKPS.

This sequence belongs to the major facilitator superfamily. Sugar transporter (TC 2.A.1.1) family.

It is found in the membrane. The protein is Putative metabolite transport protein YDL199C of Saccharomyces cerevisiae (strain ATCC 204508 / S288c) (Baker's yeast).